Reading from the N-terminus, the 77-residue chain is Acyl carrier protein (77 aa).

Residues S2–Q77 form the Carrier domain. S37 bears the O-(pantetheine 4'-phosphoryl)serine mark.

This sequence belongs to the acyl carrier protein (ACP) family. Post-translationally, 4'-phosphopantetheine is transferred from CoA to a specific serine of apo-ACP by AcpS. This modification is essential for activity because fatty acids are bound in thioester linkage to the sulfhydryl of the prosthetic group.

Its subcellular location is the cytoplasm. It functions in the pathway lipid metabolism; fatty acid biosynthesis. Carrier of the growing fatty acid chain in fatty acid biosynthesis. This Shewanella oneidensis (strain ATCC 700550 / JCM 31522 / CIP 106686 / LMG 19005 / NCIMB 14063 / MR-1) protein is Acyl carrier protein.